The following is a 393-amino-acid chain: Formate-dependent phosphoribosylglycinamide formyltransferase (393 aa).

Residues 22-23 (EL) and E82 contribute to the N(1)-(5-phospho-beta-D-ribosyl)glycinamide site. ATP is bound by residues R114, K155, 160 to 165 (SSGKGQ), 195 to 198 (EGFV), and E203. In terms of domain architecture, ATP-grasp spans 119–308 (RLAAEELGLP…EFALHVRAIL (190 aa)). E267 and E279 together coordinate Mg(2+). Residues D286, K356, and 363 to 364 (RR) contribute to the N(1)-(5-phospho-beta-D-ribosyl)glycinamide site.

It belongs to the PurK/PurT family. Homodimer.

It carries out the reaction N(1)-(5-phospho-beta-D-ribosyl)glycinamide + formate + ATP = N(2)-formyl-N(1)-(5-phospho-beta-D-ribosyl)glycinamide + ADP + phosphate + H(+). It functions in the pathway purine metabolism; IMP biosynthesis via de novo pathway; N(2)-formyl-N(1)-(5-phospho-D-ribosyl)glycinamide from N(1)-(5-phospho-D-ribosyl)glycinamide (formate route): step 1/1. In terms of biological role, involved in the de novo purine biosynthesis. Catalyzes the transfer of formate to 5-phospho-ribosyl-glycinamide (GAR), producing 5-phospho-ribosyl-N-formylglycinamide (FGAR). Formate is provided by PurU via hydrolysis of 10-formyl-tetrahydrofolate. This chain is Formate-dependent phosphoribosylglycinamide formyltransferase, found in Nitratidesulfovibrio vulgaris (strain ATCC 29579 / DSM 644 / CCUG 34227 / NCIMB 8303 / VKM B-1760 / Hildenborough) (Desulfovibrio vulgaris).